The sequence spans 877 residues: Neurotrypsin (877 aa).

Residues 1 to 20 form the signal peptide; sequence MTLARFVLALVLGALPEVVS. The N-linked (GlcNAc...) asparagine glycan is linked to Asn-26. The tract at residues 31–90 is disordered; the sequence is HRHRHRHSPPPGLQYPYYLPTQQRPPRTRPPPPLPRFPRPPRALPAQRPHALQAGHTPRP. Low complexity predominate over residues 44–55; it reads QYPYYLPTQQRP. Pro residues predominate over residues 58–73; it reads TRPPPPLPRFPRPPRA. One can recognise a Kringle domain in the interval 95–167; it reads CPAGEPWVSV…GKVDWGYCDC (73 aa). Intrachain disulfides connect Cys-95–Cys-167, Cys-111–Cys-151, Cys-140–Cys-165, Cys-197–Cys-261, Cys-210–Cys-271, Cys-241–Cys-251, Cys-307–Cys-371, Cys-320–Cys-381, Cys-351–Cys-361, Cys-414–Cys-477, Cys-427–Cys-487, Cys-457–Cys-467, Cys-527–Cys-591, Cys-540–Cys-601, Cys-571–Cys-581, Cys-621–Cys-752, Cys-663–Cys-679, Cys-767–Cys-833, Cys-796–Cys-810, and Cys-823–Cys-852. 4 SRCR domains span residues 172-273, 282-383, 389-489, and 502-603; these read VRLR…TCSF, IRLV…SCTP, IRLA…ACYP, and VRLM…ICDY. Positions 621-632 are zymogen activation region; sequence CGLRLLHRRQKR. A Peptidase S1 domain is found at 633-876; it reads IIGGKNSLRG…FVPWIKSVTK (244 aa). The active-site Charge relay system is His-678. Residue Asn-685 is glycosylated (N-linked (GlcNAc...) asparagine). Catalysis depends on Asp-728, which acts as the Charge relay system. The Charge relay system role is filled by Ser-827.

Belongs to the peptidase S1 family.

The protein localises to the secreted. Functionally, plays a role in neuronal plasticity and the proteolytic action may subserve structural reorganizations associated with learning and memory operations. This Pongo pygmaeus (Bornean orangutan) protein is Neurotrypsin (PRSS12).